The primary structure comprises 437 residues: Septin-7 (437 aa).

S2 carries the post-translational modification N-acetylserine. A Phosphotyrosine modification is found at Y30. Positions R47–A316 constitute a Septin-type G domain. An interaction with SEPTIN12 region spans residues R47–V317. The G1 motif stretch occupies residues G57–S64. Residue G57–S64 coordinates GTP. Phosphoserine is present on S77. Residues T90, G116, and K195–E203 contribute to the GTP site. Residues D113–G116 form a G3 motif region. Positions A194–D197 are G4 motif. T228 is modified (phosphothreonine). 2 residues coordinate GTP: G250 and R265. Residues T332–K433 adopt a coiled-coil conformation. S334 is subject to Phosphoserine. N6-acetyllysine is present on K373. Positions E378 to N410 are enriched in basic and acidic residues. Residues E378–F437 form a disordered region. Phosphoserine is present on S424. Phosphothreonine is present on T426.

It belongs to the TRAFAC class TrmE-Era-EngA-EngB-Septin-like GTPase superfamily. Septin GTPase family. In terms of assembly, septins polymerize into heterooligomeric protein complexes that form filaments, and associate with cellular membranes, actin filaments and microtubules. GTPase activity is required for filament formation. Filaments are assembled from asymmetrical heterotrimers, composed of SEPTIN2, SEPTIN6 and SEPTIN7 that associate head-to-head to form a hexameric unit. Within the trimer, directly interacts with SEPTIN6, while interaction with SEPTIN2 seems indirect. In the absence of SEPTIN6, forms homodimers. Interacts directly with CENPE and links CENPE to septin filaments composed of SEPTIN2, SEPTIN6 and SEPTIN7. Interacts with SEPTIN5, SEPTIN8, SEPTIN9 and SEPTIN11. Component of a septin core octameric complex consisting of SEPTIN12, SEPTIN7, SEPTIN6 and SEPTIN2 or SEPTIN4 in the order 12-7-6-2-2-6-7-12 or 12-7-6-4-4-6-7-12 and located in the sperm annulus; the SEPTIN12:SEPTIN7 association is mediated by the respective GTP-binding domains.

It localises to the cytoplasm. Its subcellular location is the chromosome. It is found in the centromere. The protein localises to the kinetochore. The protein resides in the cytoskeleton. It localises to the spindle. Its subcellular location is the cleavage furrow. It is found in the midbody. The protein localises to the cilium axoneme. The protein resides in the cell projection. It localises to the cilium. Its subcellular location is the flagellum. In terms of biological role, filament-forming cytoskeletal GTPase. Required for normal organization of the actin cytoskeleton. Required for normal progress through mitosis. Involved in cytokinesis. Required for normal association of CENPE with the kinetochore. Plays a role in ciliogenesis and collective cell movements. Forms a filamentous structure with SEPTIN12, SEPTIN6, SEPTIN2 and probably SEPTIN4 at the sperm annulus which is required for the structural integrity and motility of the sperm tail during postmeiotic differentiation. The protein is Septin-7 of Bos taurus (Bovine).